Here is a 132-residue protein sequence, read N- to C-terminus: Phosphoribosyl-AMP cyclohydrolase (132 aa).

Asp-79 lines the Mg(2+) pocket. Residue Cys-80 participates in Zn(2+) binding. Positions 81 and 83 each coordinate Mg(2+). Residues Cys-100 and Cys-107 each contribute to the Zn(2+) site.

This sequence belongs to the PRA-CH family. As to quaternary structure, homodimer. Mg(2+) serves as cofactor. It depends on Zn(2+) as a cofactor.

It localises to the cytoplasm. The catalysed reaction is 1-(5-phospho-beta-D-ribosyl)-5'-AMP + H2O = 1-(5-phospho-beta-D-ribosyl)-5-[(5-phospho-beta-D-ribosylamino)methylideneamino]imidazole-4-carboxamide. Its pathway is amino-acid biosynthesis; L-histidine biosynthesis; L-histidine from 5-phospho-alpha-D-ribose 1-diphosphate: step 3/9. Catalyzes the hydrolysis of the adenine ring of phosphoribosyl-AMP. This is Phosphoribosyl-AMP cyclohydrolase from Delftia acidovorans (strain DSM 14801 / SPH-1).